The following is a 421-amino-acid chain: Battenin (421 aa).

Helical transmembrane passes span 13-35 (SFHFMGNINNFSYCVVNAASGNL), 47-67 (IILWANIAFGLVSRLVNTFLI), 74-96 (LKIVVNCLFMSIGLIGVALSVYV), 101-123 (CIAAIAFVGIASSFGESVILSYM), and 137-157 (GTGIAGVCGSLFYIAMVAAGL). An N-linked (GlcNAc...) asparagine glycan is attached at Asn159. A helical transmembrane segment spans residues 161-181 (TIFYMMLPTVAVYFLLFFFGL). Positions 190-211 (DRTDNHNNSNNSSNNSKYTEKQ) are disordered. A compositionally biased stretch (low complexity) spans 195–205 (HNNSNNSSNNS). Asn196, Asn199, Asn200, and Asn203 each carry an N-linked (GlcNAc...) asparagine glycan. Transmembrane regions (helical) follow at residues 248 to 268 (LVWFNAVNLALVYFFEYVASV), 284 to 304 (FFIANAFAIFSFCYQLGVLIS), 313 to 333 (IKHIGVITILQGINMVFWIIQ), 338 to 358 (MVTSVWVLFILMVYCGLLGGA), and 382 to 402 (INYAALLVTVGITLAACFILV).

The protein belongs to the battenin family.

The protein localises to the lysosome membrane. This Dictyostelium discoideum (Social amoeba) protein is Battenin (cln3).